The primary structure comprises 92 residues: C-C motif chemokine 4 (92 aa).

The N-terminal stretch at 1–23 is a signal peptide; it reads MKLCVTVLSLLVLMAAFCSPALS. Intrachain disulfides connect cysteine 34–cysteine 58 and cysteine 35–cysteine 74.

It belongs to the intercrine beta (chemokine CC) family. As to quaternary structure, homodimer. Interacts with CCR5.

It localises to the secreted. Its function is as follows. Monokine with inflammatory and chemokinetic properties. This chain is C-C motif chemokine 4 (CCL4), found in Bos taurus (Bovine).